The following is a 503-amino-acid chain: ATP synthase subunit alpha, chloroplastic (503 aa).

170–177 (GDRQTGKT) contacts ATP.

The protein belongs to the ATPase alpha/beta chains family. As to quaternary structure, F-type ATPases have 2 components, CF(1) - the catalytic core - and CF(0) - the membrane proton channel. CF(1) has five subunits: alpha(3), beta(3), gamma(1), delta(1), epsilon(1). CF(0) has four main subunits: a, b, b' and c.

Its subcellular location is the plastid. The protein resides in the chloroplast thylakoid membrane. The catalysed reaction is ATP + H2O + 4 H(+)(in) = ADP + phosphate + 5 H(+)(out). Its function is as follows. Produces ATP from ADP in the presence of a proton gradient across the membrane. The alpha chain is a regulatory subunit. This Thalassiosira pseudonana (Marine diatom) protein is ATP synthase subunit alpha, chloroplastic.